Reading from the N-terminus, the 249-residue chain is Proteasome subunit alpha (249 aa).

Belongs to the peptidase T1A family. As to quaternary structure, the 20S proteasome core is composed of 14 alpha and 14 beta subunits that assemble into four stacked heptameric rings, resulting in a barrel-shaped structure. The two inner rings, each composed of seven catalytic beta subunits, are sandwiched by two outer rings, each composed of seven alpha subunits. The catalytic chamber with the active sites is on the inside of the barrel. Has a gated structure, the ends of the cylinder being occluded by the N-termini of the alpha-subunits. Is capped at one or both ends by the proteasome regulatory ATPase, PAN.

It is found in the cytoplasm. The formation of the proteasomal ATPase PAN-20S proteasome complex, via the docking of the C-termini of PAN into the intersubunit pockets in the alpha-rings, triggers opening of the gate for substrate entry. Interconversion between the open-gate and close-gate conformations leads to a dynamic regulation of the 20S proteasome proteolysis activity. Component of the proteasome core, a large protease complex with broad specificity involved in protein degradation. The sequence is that of Proteasome subunit alpha from Methanosarcina barkeri (strain Fusaro / DSM 804).